Consider the following 433-residue polypeptide: Enolase (433 aa).

Gln-163 is a (2R)-2-phosphoglycerate binding site. The active-site Proton donor is Glu-205. The Mg(2+) site is built by Asp-242, Glu-286, and Asp-313. (2R)-2-phosphoglycerate contacts are provided by Lys-338, Arg-367, Ser-368, and Lys-389. Lys-338 functions as the Proton acceptor in the catalytic mechanism.

It belongs to the enolase family. Mg(2+) is required as a cofactor.

It localises to the cytoplasm. Its subcellular location is the secreted. The protein resides in the cell surface. It catalyses the reaction (2R)-2-phosphoglycerate = phosphoenolpyruvate + H2O. The protein operates within carbohydrate degradation; glycolysis; pyruvate from D-glyceraldehyde 3-phosphate: step 4/5. Functionally, catalyzes the reversible conversion of 2-phosphoglycerate (2-PG) into phosphoenolpyruvate (PEP). It is essential for the degradation of carbohydrates via glycolysis. The chain is Enolase from Koribacter versatilis (strain Ellin345).